The sequence spans 633 residues: Proline-rich receptor-like protein kinase PERK4 (633 aa).

Residues 1–29 (MASSPESAPPTNSTSSPSPPSNTNSTTSS) are compositionally biased toward low complexity. Positions 1–145 (MASSPESAPP…GSSGGGGGGR (145 aa)) are disordered. Residues 1–151 (MASSPESAPP…GGGRSNTNTA (151 aa)) are Extracellular-facing. 2 N-linked (GlcNAc...) asparagine glycosylation sites follow: Asn-12 and Asn-24. Pro residues-rich tracts occupy residues 30 to 41 (PPAPSPPSPTPP) and 48 to 65 (SPPP…PNPP). A glycan (N-linked (GlcNAc...) asparagine) is linked at Asn-66. The span at 77–90 (QGGGGERGNGGNNG) shows a compositional bias: gly residues. A compositionally biased stretch (low complexity) spans 106-135 (SRSNGDNGGSRSSPPGDTGGSRSDNPPSSG). Over residues 136–145 (GSSGGGGGGR) the composition is skewed to gly residues. Residues 152 to 172 (IIVGVLVGAGLLMIVLIIVCL) form a helical membrane-spanning segment. The Cytoplasmic segment spans residues 173–633 (RRKKKRKDSF…MGTKSPTPPK (461 aa)). The span at 193 to 222 (QYYGNNNNNNASQNYPNWHLNSQGQNQQST) shows a compositional bias: low complexity. The disordered stretch occupies residues 193 to 255 (QYYGNNNNNN…SMYSGPSRPV (63 aa)). Phosphothreonine is present on Thr-273. The 279-residue stretch at 284 to 562 (FTDANLLGQG…VRALEGEVSL (279 aa)) folds into the Protein kinase domain. ATP contacts are provided by residues 290-298 (LGQGGFGYV) and Lys-312. Tyr-357 carries the phosphotyrosine modification. Residue Asp-408 is the Proton acceptor of the active site. Ser-441 bears the Phosphoserine mark. A phosphothreonine mark is found at Thr-442 and Thr-447. Tyr-455 carries the phosphotyrosine modification. A compositionally biased stretch (polar residues) spans 608–619 (FPVSDCEGTSSN). The segment at 608–633 (FPVSDCEGTSSNDSRDMGTKSPTPPK) is disordered.

It belongs to the protein kinase superfamily. Ser/Thr protein kinase family. As to expression, mostly expressed in inflorescence bolts. Also present in roots, stems, germinated seeds, cotyledons, pollen, stamen and stigma.

It is found in the cell membrane. It catalyses the reaction L-seryl-[protein] + ATP = O-phospho-L-seryl-[protein] + ADP + H(+). The catalysed reaction is L-threonyl-[protein] + ATP = O-phospho-L-threonyl-[protein] + ADP + H(+). Activated by ABA and Ca(2+). Its function is as follows. Required during abscisic acid (ABA)-mediated activation of Ca(2+) channels. Regulates ABA signaling pathways. Modulates the expression of genes related to cell elongation and ABA signaling during root growth. The sequence is that of Proline-rich receptor-like protein kinase PERK4 (PERK4) from Arabidopsis thaliana (Mouse-ear cress).